Reading from the N-terminus, the 140-residue chain is Transmembrane protein 107 (140 aa).

A run of 2 helical transmembrane segments spans residues 7 to 27 and 53 to 73; these read LVPSRFLTLLAHLVVVITLFW and LVAALCLTLGLFAVELAGFLS. An N-linked (GlcNAc...) asparagine glycan is attached at N79. 2 helical membrane passes run 83–103 and 113–133; these read SLLSIAAHCSASVALSFFVFE and IFTFCSAFPAVTETALFIAVF.

As to quaternary structure, part of the tectonic-like complex (also named B9 complex). Interacts with TMEM237, TMEM231, MKS1 and TMEM216.

It is found in the membrane. The protein localises to the cell projection. The protein resides in the cilium. In terms of biological role, plays a role in cilia formation and embryonic patterning. Requires for normal Sonic hedgehog (Shh) signaling in the neural tube and acts in combination with GLI2 and GLI3 to pattern ventral and intermediate neuronal cell types. During ciliogenesis regulates the ciliary transition zone localization of some MKS complex proteins. This Mus musculus (Mouse) protein is Transmembrane protein 107.